A 513-amino-acid polypeptide reads, in one-letter code: Light-independent protochlorophyllide reductase subunit B (513 aa).

Position 36 (Asp36) interacts with [4Fe-4S] cluster. Asp299 functions as the Proton donor in the catalytic mechanism. 434-435 contributes to the substrate binding site; it reads GM.

The protein belongs to the ChlB/BchB/BchZ family. In terms of assembly, protochlorophyllide reductase is composed of three subunits; ChlL, ChlN and ChlB. Forms a heterotetramer of two ChlB and two ChlN subunits. Requires [4Fe-4S] cluster as cofactor.

It localises to the plastid. It is found in the chloroplast. The catalysed reaction is chlorophyllide a + oxidized 2[4Fe-4S]-[ferredoxin] + 2 ADP + 2 phosphate = protochlorophyllide a + reduced 2[4Fe-4S]-[ferredoxin] + 2 ATP + 2 H2O. The protein operates within porphyrin-containing compound metabolism; chlorophyll biosynthesis (light-independent). In terms of biological role, component of the dark-operative protochlorophyllide reductase (DPOR) that uses Mg-ATP and reduced ferredoxin to reduce ring D of protochlorophyllide (Pchlide) to form chlorophyllide a (Chlide). This reaction is light-independent. The NB-protein (ChlN-ChlB) is the catalytic component of the complex. The protein is Light-independent protochlorophyllide reductase subunit B of Staurastrum punctulatum (Green alga).